The following is a 321-amino-acid chain: Glucokinase (321 aa).

Position 8–13 (8–13 (GDVGGT)) interacts with ATP.

It belongs to the bacterial glucokinase family.

It is found in the cytoplasm. It carries out the reaction D-glucose + ATP = D-glucose 6-phosphate + ADP + H(+). The sequence is that of Glucokinase from Citrobacter koseri (strain ATCC BAA-895 / CDC 4225-83 / SGSC4696).